Reading from the N-terminus, the 635-residue chain is MRTRLNFLLLCIASVLSVIWIGVLLTWNDNNLGGISLNGGKDSAYDDLLSLGSFNDMEVDSYVTNIYDNAPVLGCTDLSYHGLLKVTPKHDLACDLEFIRAQILDIDVYSAIKDLEDKALTVKQKVEKHWFTFYGSSVFLPEHDVHYLVRRVIFSAEGKANSPVTSIIVAQIYDKNWNELNGHFLDILNPNTGKVQHNTFPQVLPIATNFVKGKKFRGAEDPRVVLRKGRFGPDPLVMFNSLTQDNKRRRIFTISPFDQFKTVMYDIKDYEMPRYEKNWVPFFLKDNQEAVHFVYSFNPLRVLKCSLDDGSCDIVFEIPKVDSMSSELRGATPMINLPQAIPMAKDKEIWVSFPRTRIANCGCSRTTYRPMLMLFVREGSNFFVELLSTSLDFGLEVLPYSGNGLPCSADHSVLIPNSIDNWEVVDSNGDDILTLSFSEADKSTSVIHIRGLYNYLSELDGYQGPEAEDEHNFQRILSDLHFDNKTTVNNFIKVQSCALDAAKGYCKEYGLTRGEAERRRRVAEERKKKEKEEEEKKKKKEKEEEEKKRIEEEKKKIEEKERKEKEKEEAERKKLQEMKKKLEEITEKLEKGQRNKEIDPKEKQREEEERKERVRKIAEKQRKEAEKKEAEKKGK.

The Cytoplasmic segment spans residues 1–6 (MRTRLN). A helical membrane pass occupies residues 7 to 27 (FLLLCIASVLSVIWIGVLLTW). Residues 28–635 (NDNNLGGISL…EKKEAEKKGK (608 aa)) are Extracellular-facing. Asparagine 484 is a glycosylation site (N-linked (GlcNAc...) asparagine). Residues 512-635 (TRGEAERRRR…EKKEAEKKGK (124 aa)) are a coiled coil. Positions 517 to 635 (ERRRRVAEER…EKKEAEKKGK (119 aa)) are disordered.

It belongs to the BMT family.

It localises to the membrane. Functionally, beta-mannosyltransferase involved in cell wall biosynthesis. Initiates the beta-mannosylation of core N-linked glycans. This chain is Beta-mannosyltransferase 2 (BMT2), found in Komagataella phaffii (strain ATCC 76273 / CBS 7435 / CECT 11047 / NRRL Y-11430 / Wegner 21-1) (Yeast).